Here is a 318-residue protein sequence, read N- to C-terminus: MTLIDNHEAVGMEGVPRLSEASARDYFELLKPRVMSLVVFTAFAGLVLAPGQINPVIGFIAILCIAIGAGASGALNMWYDADIDAVMSRTAKRPIPAGKILPQEALAFGLTLSAFSVIILGLAVNWLAAGLLAFTIFFYVVIYTMWLKRSTPQNIVIGGAAGAFPPMIGWACVTGGVSVESIVLFLIIFLWTPAHFWALALFKMGDYGAVGVPMMPNVCGEATTKRQIVVYALLTALSGICPTLLGFASLGYGAFATALGLGFIWYSLAVLRMPEADKRMLPAKKLFAFSIAYLFAIFSALLVDYMIAHVWLDAGGII.

A run of 9 helical transmembrane segments spans residues 34 to 54 (VMSL…GQIN), 55 to 75 (PVIG…SGAL), 95 to 115 (IPAG…LSAF), 118 to 138 (IILG…TIFF), 155 to 175 (IVIG…CVTG), 182 to 202 (IVLF…LALF), 228 to 250 (IVVY…FASL), 254 to 273 (AFAT…VLRM), and 287 to 307 (FAFS…DYMI).

Belongs to the UbiA prenyltransferase family. Protoheme IX farnesyltransferase subfamily.

It is found in the cell inner membrane. The enzyme catalyses heme b + (2E,6E)-farnesyl diphosphate + H2O = Fe(II)-heme o + diphosphate. The protein operates within porphyrin-containing compound metabolism; heme O biosynthesis; heme O from protoheme: step 1/1. In terms of biological role, converts heme B (protoheme IX) to heme O by substitution of the vinyl group on carbon 2 of heme B porphyrin ring with a hydroxyethyl farnesyl side group. The sequence is that of Protoheme IX farnesyltransferase from Sinorhizobium fredii (strain NBRC 101917 / NGR234).